Here is a 293-residue protein sequence, read N- to C-terminus: GTP cyclohydrolase FolE2 (293 aa).

It belongs to the GTP cyclohydrolase IV family.

The enzyme catalyses GTP + H2O = 7,8-dihydroneopterin 3'-triphosphate + formate + H(+). It participates in cofactor biosynthesis; 7,8-dihydroneopterin triphosphate biosynthesis; 7,8-dihydroneopterin triphosphate from GTP: step 1/1. Functionally, converts GTP to 7,8-dihydroneopterin triphosphate. The protein is GTP cyclohydrolase FolE2 of Pseudomonas entomophila (strain L48).